The primary structure comprises 715 residues: Solute carrier organic anion transporter family member 1C1 (715 aa).

At 1–43 the chain is on the cytoplasmic side; that stretch reads MDTSSKENAHLFHKNSAQPAGGPSFTVGYPSTEEARPCCGKLK. The chain crosses the membrane as a helical span at residues 44-63; it reads VFLGALSFVYFAKALAEGYL. The Extracellular portion of the chain corresponds to 64 to 82; it reads KSTVTQIERRFEIPSSLVG. Residues 83 to 103 form a helical membrane-spanning segment; that stretch reads IIDGSFEIGNLLVITFVSYFG. Residues 104 to 109 lie on the Cytoplasmic side of the membrane; that stretch reads AKLHRP. A helical transmembrane segment spans residues 110 to 134; the sequence is KIIGAGCLVMGFGTMLIAVPQFFME. The Extracellular portion of the chain corresponds to 135 to 187; that stretch reads KYSYEKYERYSPSSNVTPSISPCYLESSSPSPSSILGKSQNKISHECVGDSSS. A helical transmembrane segment spans residues 188–216; that stretch reads SMWVYVFLGNLLRGLGETPIQPLGIAYLD. The Cytoplasmic portion of the chain corresponds to 217 to 235; the sequence is DFASEDNAAFYIGCVQTVA. A helical transmembrane segment spans residues 236–256; sequence IIGPIFGFLLGSLCAKLYVDI. The Extracellular portion of the chain corresponds to 257-274; the sequence is GFVNLDHITITPKDPQWV. The helical transmembrane segment at 275 to 299 threads the bilayer; the sequence is GAWWLGYLIAGFLSLLAAVPFWCLP. Residues 300–351 lie on the Cytoplasmic side of the membrane; sequence KTLPRSQSRENSGSTSEKSKFIDDPIHYQMAPGDDKMKIMEMAKDFLPSLKT. A helical membrane pass occupies residues 352–373; the sequence is LFRNPVYILYLCASTVQFNSLF. The Extracellular portion of the chain corresponds to 374 to 393; it reads GMVTYKPKYIEQQYGQSSSK. The helical transmembrane segment at 394-417 threads the bilayer; it reads ANFVIGLINIPAVALGIFSGGIVM. At 418 to 421 the chain is on the cytoplasmic side; that stretch reads KKFR. The chain crosses the membrane as a helical span at residues 422-445; sequence LGICEATKLYLGSSVFGYLLFLSL. Residues 446-557 are Extracellular-facing; the sequence is FALGCENSSV…NGCSQMFLYF (112 aa). A glycan (N-linked (GlcNAc...) asparagine) is linked at Asn452. The Kazal-like domain occupies 473 to 528; that stretch reads RALFSDCNSRCKCSDSKWEPMCGDNGITYVSACLAGCQSSSRSGKNIIFSNCTCVG. Disulfide bonds link Cys479–Cys509, Cys485–Cys505, and Cys494–Cys526. N-linked (GlcNAc...) asparagine glycosylation is found at Asn523 and Asn536. Residues 558-580 traverse the membrane as a helical segment; it reads LVISVITSYTLSLGGIPGYILLL. Topologically, residues 581–589 are cytoplasmic; it reads RCIQPQLKS. The helical transmembrane segment at 590 to 615 threads the bilayer; the sequence is FALGIYTLAVRVLAGIPAPVYFGVLI. The Extracellular segment spans residues 616–649; that stretch reads DTSCLKWGFKKCGSRGSCRLYDSHAFRHIYLGLT. Residues 650–667 form a helical membrane-spanning segment; that stretch reads TLLGTVSVFLSMAVLFVL. Residues 668–715 lie on the Cytoplasmic side of the membrane; sequence KKKYVSKHSSLITTREKIGMSSSIKKETCAARDRGLQPKYWPGKETRL.

Belongs to the organo anion transporter (TC 2.A.60) family. As to expression, widely expressed throughout the brain except in the cerebellum. Not detected in kidney, heart, lung, skeletal muscle, spleen, liver, nor testis. Highly expressed in cerebral microvessels throughout the brain and in the choroid plexus (at mRNA and protein level).

Its subcellular location is the cell membrane. The enzyme catalyses 3,3',5'-triiodo-L-thyronine(out) = 3,3',5'-triiodo-L-thyronine(in). It carries out the reaction L-thyroxine(out) = L-thyroxine(in). It catalyses the reaction L-thyroxine sulfate(out) = L-thyroxine sulfate(in). The catalysed reaction is 17beta-estradiol 17-O-(beta-D-glucuronate)(out) = 17beta-estradiol 17-O-(beta-D-glucuronate)(in). The enzyme catalyses 3,3',5-triiodo-L-thyronine(out) = 3,3',5-triiodo-L-thyronine(in). In terms of biological role, mediates the Na(+)-independent high affinity transport of thyroid hormones at the plasma membrane of brain capillary endothelial cells. The transport activity of substrates L-thyroxine (T4) and 3,3',5'-triiodo-L-thyronine (reverse T3, rT3) is much greater than that of 3,3',5-triiodo-L-thyronine (T3). The prehormone, T4, is the major form in the circulating blood and is converted to the active form, T3, by the iodothyronine-deiodinase in peripheral organs. T3 plays an essential role in brain development via binding to specific nuclear receptors (thyroid hormone receptor). Also transports organic anions such as the conjugated steroid 17-beta-glucuronosyl estradiol (17beta-estradiol 17-O-(beta-D-glucuronate)). Transports T4 and estrone-3-sulfate in a pH-insensitive manner. May serve as a drug efflux system at the blood brain barrier. This chain is Solute carrier organic anion transporter family member 1C1 (Slco1c1), found in Mus musculus (Mouse).